The primary structure comprises 35 residues: 3-hydroxyisobutyrate dehydrogenase (35 aa).

4–33 (TPVGFIGLGNMGNPMAKNLMKHGYPLIIYD) provides a ligand contact to NAD(+). Lys24 is modified (N6-acetyllysine; alternate). Position 24 is an N6-succinyllysine; alternate (Lys24).

Belongs to the HIBADH-related family. 3-hydroxyisobutyrate dehydrogenase subfamily. In terms of assembly, homodimer.

The protein localises to the mitochondrion. The catalysed reaction is 3-hydroxy-2-methylpropanoate + NAD(+) = 2-methyl-3-oxopropanoate + NADH + H(+). The protein operates within amino-acid degradation; L-valine degradation. This is 3-hydroxyisobutyrate dehydrogenase (HIBADH) from Oryctolagus cuniculus (Rabbit).